The following is a 117-amino-acid chain: Glycoprotein hormones alpha chain (117 aa).

The signal sequence occupies residues 1–23; sequence MGSVKSAGLSLLLLSFLLYVADS. 5 cysteine pairs are disulfide-bonded: Cys34–Cys57, Cys37–Cys86, Cys54–Cys107, Cys58–Cys109, and Cys85–Cys112. N-linked (GlcNAc...) asparagine glycosylation is found at Asn78 and Asn103.

The protein belongs to the glycoprotein hormones subunit alpha family. As to quaternary structure, heterodimer. Glycoprotein hormones are heterodimers composed of a common alpha chain described here and a unique beta chain which confers their biological specificity to the different hormones.

The protein resides in the secreted. In terms of biological role, shared alpha chain of heterodimeric glycoprotein hormones. These hormones bind specific receptors on target cells that in turn activate downstream signaling pathways. Involved in gametogenesis and steroidogenesis. The polypeptide is Glycoprotein hormones alpha chain (cga) (Acanthopagrus latus (Yellowfin seabream)).